A 229-amino-acid chain; its full sequence is Large ribosomal subunit protein uL1 (229 aa).

This sequence belongs to the universal ribosomal protein uL1 family. As to quaternary structure, part of the 50S ribosomal subunit.

Its function is as follows. Binds directly to 23S rRNA. The L1 stalk is quite mobile in the ribosome, and is involved in E site tRNA release. In terms of biological role, protein L1 is also a translational repressor protein, it controls the translation of the L11 operon by binding to its mRNA. The chain is Large ribosomal subunit protein uL1 from Ureaplasma parvum serovar 3 (strain ATCC 27815 / 27 / NCTC 11736).